Consider the following 686-residue polypeptide: Methionine--tRNA ligase (686 aa).

The 'HIGH' region motif lies at 15-25 (PYANGSIHLGH). Residues Cys146, Cys149, Cys159, and Cys162 each contribute to the Zn(2+) site. Residues 332 to 336 (KMSKS) carry the 'KMSKS' region motif. ATP is bound at residue Lys335. A tRNA-binding domain is found at 585–686 (AFEAVDMRIA…EGAQPGMRVM (102 aa)).

This sequence belongs to the class-I aminoacyl-tRNA synthetase family. MetG type 1 subfamily. As to quaternary structure, homodimer. Zn(2+) is required as a cofactor.

The protein resides in the cytoplasm. It carries out the reaction tRNA(Met) + L-methionine + ATP = L-methionyl-tRNA(Met) + AMP + diphosphate. Is required not only for elongation of protein synthesis but also for the initiation of all mRNA translation through initiator tRNA(fMet) aminoacylation. In Aliivibrio fischeri (strain MJ11) (Vibrio fischeri), this protein is Methionine--tRNA ligase.